A 391-amino-acid chain; its full sequence is Ectodysplasin-A (391 aa).

Over residues 1–21 (MGYPEVERREPLPAAAPRERG) the composition is skewed to basic and acidic residues. A disordered region spans residues 1 to 28 (MGYPEVERREPLPAAAPRERGSQGCGCR). The Cytoplasmic portion of the chain corresponds to 1 to 41 (MGYPEVERREPLPAAAPRERGSQGCGCRGAPARAGEGNSCR). A helical; Signal-anchor for type II membrane protein membrane pass occupies residues 42-62 (LFLGFFGLSLALHLLTLCCYL). The Extracellular segment spans residues 63–391 (ELRSELRRER…AIRLGEAPAS (329 aa)). Disordered stretches follow at residues 72 to 129 (RGTE…DSQD) and 146 to 244 (YSEE…TGTR). The segment covering 86-96 (TSGTLSSPGSL) has biased composition (low complexity). The Collagen-like domain maps to 180 to 229 (GPPGPNGPPGPPGPPGPQGPPGIPGIPGIPGTTVMGPPGPPGPPGPQGPP). 2 stretches are compositionally biased toward pro residues: residues 181 to 203 (PPGPNGPPGPPGPPGPQGPPGIP) and 216 to 228 (PPGPPGPPGPQGP). Positions 249-385 (AVVHLQGQGS…HTTFFGAIRL (137 aa)) constitute a THD domain. A glycan (N-linked (GlcNAc...) asparagine) is linked at Asn313. Cys332 and Cys346 are joined by a disulfide. The N-linked (GlcNAc...) asparagine glycan is linked to Asn372.

It belongs to the tumor necrosis factor family. Homotrimer. The homotrimers may then dimerize and form higher-order oligomers. N-glycosylated. Post-translationally, processing by furin produces a secreted form.

It is found in the cell membrane. Its subcellular location is the secreted. Its function is as follows. Cytokine which is involved in epithelial-mesenchymal signaling during morphogenesis of ectodermal organs. Functions as a ligand activating the DEATH-domain containing receptors EDAR and EDA2R. Isoform TAA binds only to the receptor EDAR, while isoform TA-A2 binds exclusively to the receptor EDA2R. May also play a role in cell adhesion. In terms of biological role, isoform TAA binds only to the receptor EDAR, while isoform TA-A2 binds exclusively to the receptor EDA2R. Isoform TA-A2 binds exclusively to the receptor EDA2R. This Mus musculus (Mouse) protein is Ectodysplasin-A (Eda).